A 613-amino-acid polypeptide reads, in one-letter code: MNMLALTIILPLIGFVLLAFSRGRWSENVSAIVGVGSVGLAALVTAFIGVDFFANGEQTYSQPLWTWMSVGDFNIGFNLVLDGLSLTMLSVVTGVGFLIHMYASWYMRGEEGYSRFFAYTNLFIASMVVLVLADNLLLMYLGWEGVGLCSYLLIGFYYTDPKNGAAAMKAFVVTRVGDVFLAFALFILYNELGTLNFREMVELAPAHFADGNNMLMWATLMLLGGAVGKSAQLPLQTWLADAMAGPTPVSALIHAATMVTAGVYLIARTHGLFLMTPEVLHLVGIVGAVTLLLAGFAALVQTDIKRVLAYSTMSQIGYMFLALGVQAWDAAIFHLMTHAFFKALLFLASGSVILACHHEQNIFKMGGLRKSIPLVYLCFLVGGAALSALPLVTAGFFSKDEILAGAMANGHINLMVAGLVGAFMTSLYTFRMIFIVFHGKEQIHAHAVKGVTHSLPLIVLLILSTFVGALIVPPLQGVLPQTTELAHGSMLTLEITSGVVAVVGILLAAWLWLGKRTLVTSIANSAPGRLLGTWWYNAWGFDWLYDKVFVKPFLGIAWLLKRDPLNSMMNIPAVLSRFAGKGLLLSENGYLRWYVASMSIGAVVVLALLMVLR.

The Periplasmic portion of the chain corresponds to 1-6 (MNMLAL). A helical membrane pass occupies residues 7–23 (TIILPLIGFVLLAFSRG). The Cytoplasmic portion of the chain corresponds to 24 to 31 (RWSENVSA). A helical transmembrane segment spans residues 32-52 (IVGVGSVGLAALVTAFIGVDF). Topologically, residues 53 to 74 (FANGEQTYSQPLWTWMSVGDFN) are periplasmic. The helical transmembrane segment at 75-99 (IGFNLVLDGLSLTMLSVVTGVGFLI) threads the bilayer. Topologically, residues 100 to 115 (HMYASWYMRGEEGYSR) are cytoplasmic. The helical transmembrane segment at 116–133 (FFAYTNLFIASMVVLVLA) threads the bilayer. Over 134–210 (DNLLLMYLGW…VELAPAHFAD (77 aa)) the chain is Periplasmic. The chain crosses the membrane as a helical span at residues 211–228 (GNNMLMWATLMLLGGAVG). Residues 229-248 (KSAQLPLQTWLADAMAGPTP) are Cytoplasmic-facing. Residues 249–267 (VSALIHAATMVTAGVYLIA) traverse the membrane as a helical segment. At 268–281 (RTHGLFLMTPEVLH) the chain is on the periplasmic side. A helical membrane pass occupies residues 282 to 300 (LVGIVGAVTLLLAGFAALV). Over 301–306 (QTDIKR) the chain is Cytoplasmic. A helical transmembrane segment spans residues 307–325 (VLAYSTMSQIGYMFLALGV). The Periplasmic portion of the chain corresponds to 326 to 338 (QAWDAAIFHLMTH). A helical membrane pass occupies residues 339-356 (AFFKALLFLASGSVILAC). Residues 357–373 (HHEQNIFKMGGLRKSIP) lie on the Cytoplasmic side of the membrane. Residues 374–397 (LVYLCFLVGGAALSALPLVTAGFF) form a helical membrane-spanning segment. At 398 to 413 (SKDEILAGAMANGHIN) the chain is on the periplasmic side. A helical transmembrane segment spans residues 414-437 (LMVAGLVGAFMTSLYTFRMIFIVF). The Cytoplasmic segment spans residues 438-454 (HGKEQIHAHAVKGVTHS). The chain crosses the membrane as a helical span at residues 455-472 (LPLIVLLILSTFVGALIV). The Periplasmic segment spans residues 473–494 (PPLQGVLPQTTELAHGSMLTLE). A helical membrane pass occupies residues 495-514 (ITSGVVAVVGILLAAWLWLG). The Cytoplasmic portion of the chain corresponds to 515-589 (KRTLVTSIAN…GKGLLLSENG (75 aa)). A helical transmembrane segment spans residues 590–607 (YLRWYVASMSIGAVVVLA). The Periplasmic portion of the chain corresponds to 608-613 (LLMVLR).

This sequence belongs to the complex I subunit 5 family. In terms of assembly, composed of 13 different subunits. Subunits NuoA, H, J, K, L, M, N constitute the membrane sector of the complex.

It localises to the cell inner membrane. It catalyses the reaction a quinone + NADH + 5 H(+)(in) = a quinol + NAD(+) + 4 H(+)(out). NDH-1 shuttles electrons from NADH, via FMN and iron-sulfur (Fe-S) centers, to quinones in the respiratory chain. The immediate electron acceptor for the enzyme in this species is believed to be ubiquinone. Couples the redox reaction to proton translocation (for every two electrons transferred, four hydrogen ions are translocated across the cytoplasmic membrane), and thus conserves the redox energy in a proton gradient. The chain is NADH-quinone oxidoreductase subunit L (nuoL) from Escherichia coli (strain K12).